The following is a 336-amino-acid chain: Ketol-acid reductoisomerase (NADP(+)) (336 aa).

The KARI N-terminal Rossmann domain occupies 2–182; that stretch reads AKIYYQQDCN…GGARAGVLET (181 aa). Residues 25-28, Ser51, Ser53, and 83-86 contribute to the NADP(+) site; these read YGSQ and DEKQ. Residue His108 is part of the active site. Residue Gly134 participates in NADP(+) binding. The KARI C-terminal knotted domain occupies 183–328; it reads TFREETETDL…AELRGLMSWT (146 aa). Residues Asp191, Glu195, Glu227, and Glu231 each contribute to the Mg(2+) site. A substrate-binding site is contributed by Ser252.

This sequence belongs to the ketol-acid reductoisomerase family. The cofactor is Mg(2+).

The enzyme catalyses (2R)-2,3-dihydroxy-3-methylbutanoate + NADP(+) = (2S)-2-acetolactate + NADPH + H(+). The catalysed reaction is (2R,3R)-2,3-dihydroxy-3-methylpentanoate + NADP(+) = (S)-2-ethyl-2-hydroxy-3-oxobutanoate + NADPH + H(+). Its pathway is amino-acid biosynthesis; L-isoleucine biosynthesis; L-isoleucine from 2-oxobutanoate: step 2/4. It participates in amino-acid biosynthesis; L-valine biosynthesis; L-valine from pyruvate: step 2/4. Functionally, involved in the biosynthesis of branched-chain amino acids (BCAA). Catalyzes an alkyl-migration followed by a ketol-acid reduction of (S)-2-acetolactate (S2AL) to yield (R)-2,3-dihydroxy-isovalerate. In the isomerase reaction, S2AL is rearranged via a Mg-dependent methyl migration to produce 3-hydroxy-3-methyl-2-ketobutyrate (HMKB). In the reductase reaction, this 2-ketoacid undergoes a metal-dependent reduction by NADPH to yield (R)-2,3-dihydroxy-isovalerate. In Lachnoclostridium phytofermentans (strain ATCC 700394 / DSM 18823 / ISDg) (Clostridium phytofermentans), this protein is Ketol-acid reductoisomerase (NADP(+)).